Here is a 257-residue protein sequence, read N- to C-terminus: 3-methyl-2-oxobutanoate hydroxymethyltransferase (257 aa).

The Mg(2+) site is built by D42 and D86. Residues 42-43 (DS), D86, and K116 each bind 3-methyl-2-oxobutanoate. E118 is a Mg(2+) binding site. Catalysis depends on E185, which acts as the Proton acceptor.

The protein belongs to the PanB family. Homodecamer; pentamer of dimers. It depends on Mg(2+) as a cofactor.

It is found in the cytoplasm. The catalysed reaction is 3-methyl-2-oxobutanoate + (6R)-5,10-methylene-5,6,7,8-tetrahydrofolate + H2O = 2-dehydropantoate + (6S)-5,6,7,8-tetrahydrofolate. The protein operates within cofactor biosynthesis; (R)-pantothenate biosynthesis; (R)-pantoate from 3-methyl-2-oxobutanoate: step 1/2. In terms of biological role, catalyzes the reversible reaction in which hydroxymethyl group from 5,10-methylenetetrahydrofolate is transferred onto alpha-ketoisovalerate to form ketopantoate. The chain is 3-methyl-2-oxobutanoate hydroxymethyltransferase from Prochlorococcus marinus (strain MIT 9301).